We begin with the raw amino-acid sequence, 309 residues long: Curved DNA-binding protein (309 aa).

Residues 5–69 enclose the J domain; the sequence is DYYAILGVKP…ERRAEYDQLR (65 aa).

The protein localises to the cytoplasm. It localises to the nucleoid. In terms of biological role, DNA-binding protein that preferentially recognizes a curved DNA sequence. It is probably a functional analog of DnaJ; displays overlapping activities with DnaJ, but functions under different conditions, probably acting as a molecular chaperone in an adaptive response to environmental stresses other than heat shock. Lacks autonomous chaperone activity; binds native substrates and targets them for recognition by DnaK. Its activity is inhibited by the binding of CbpM. The polypeptide is Curved DNA-binding protein (Serratia proteamaculans (strain 568)).